The chain runs to 140 residues: ATP synthase epsilon chain (140 aa).

Belongs to the ATPase epsilon chain family. As to quaternary structure, F-type ATPases have 2 components, CF(1) - the catalytic core - and CF(0) - the membrane proton channel. CF(1) has five subunits: alpha(3), beta(3), gamma(1), delta(1), epsilon(1). CF(0) has three main subunits: a, b and c.

The protein resides in the cell inner membrane. Functionally, produces ATP from ADP in the presence of a proton gradient across the membrane. The chain is ATP synthase epsilon chain from Neisseria meningitidis serogroup B (strain ATCC BAA-335 / MC58).